We begin with the raw amino-acid sequence, 238 residues long: tRNA (guanine-N(7)-)-methyltransferase (238 aa).

The S-adenosyl-L-methionine site is built by glutamate 70, aspartate 95, aspartate 122, and aspartate 145. The active site involves aspartate 145. Substrate contacts are provided by residues lysine 149, aspartate 181, and threonine 216 to glutamate 219.

It belongs to the class I-like SAM-binding methyltransferase superfamily. TrmB family.

It catalyses the reaction guanosine(46) in tRNA + S-adenosyl-L-methionine = N(7)-methylguanosine(46) in tRNA + S-adenosyl-L-homocysteine. The protein operates within tRNA modification; N(7)-methylguanine-tRNA biosynthesis. Functionally, catalyzes the formation of N(7)-methylguanine at position 46 (m7G46) in tRNA. The chain is tRNA (guanine-N(7)-)-methyltransferase from Neisseria meningitidis serogroup A / serotype 4A (strain DSM 15465 / Z2491).